Consider the following 80-residue polypeptide: U19-lycotoxin-Ls1a (80 aa).

The N-terminal stretch at Met-1–Ala-22 is a signal peptide. Residues Gln-23–Arg-34 constitute a propeptide that is removed on maturation. 4 disulfide bridges follow: Cys-36/Cys-50, Cys-43/Cys-55, Cys-49/Cys-66, and Cys-57/Cys-64.

This sequence belongs to the neurotoxin 02 (plectoxin) family. 05 (U19-lycotoxin) subfamily. In terms of tissue distribution, expressed by the venom gland.

The protein localises to the secreted. In Lycosa singoriensis (Wolf spider), this protein is U19-lycotoxin-Ls1a.